The chain runs to 393 residues: Succinate--CoA ligase [ADP-forming] subunit beta (393 aa).

Residues 9–251 (KALFEKFGVL…LNEEDPKEIE (243 aa)) form the ATP-grasp domain. Residues Lys46, 53-55 (GRG), Ser109, and Glu114 each bind ATP. Mg(2+)-binding residues include Asn206 and Asp220. Substrate contacts are provided by residues Asn271 and 328–330 (GIM).

The protein belongs to the succinate/malate CoA ligase beta subunit family. In terms of assembly, heterotetramer of two alpha and two beta subunits. Mg(2+) serves as cofactor.

The enzyme catalyses succinate + ATP + CoA = succinyl-CoA + ADP + phosphate. It carries out the reaction GTP + succinate + CoA = succinyl-CoA + GDP + phosphate. It participates in carbohydrate metabolism; tricarboxylic acid cycle; succinate from succinyl-CoA (ligase route): step 1/1. In terms of biological role, succinyl-CoA synthetase functions in the citric acid cycle (TCA), coupling the hydrolysis of succinyl-CoA to the synthesis of either ATP or GTP and thus represents the only step of substrate-level phosphorylation in the TCA. The beta subunit provides nucleotide specificity of the enzyme and binds the substrate succinate, while the binding sites for coenzyme A and phosphate are found in the alpha subunit. The protein is Succinate--CoA ligase [ADP-forming] subunit beta of Opitutus terrae (strain DSM 11246 / JCM 15787 / PB90-1).